The chain runs to 579 residues: Proline--tRNA ligase (579 aa).

Belongs to the class-II aminoacyl-tRNA synthetase family. ProS type 1 subfamily. Homodimer.

The protein resides in the cytoplasm. The enzyme catalyses tRNA(Pro) + L-proline + ATP = L-prolyl-tRNA(Pro) + AMP + diphosphate. Functionally, catalyzes the attachment of proline to tRNA(Pro) in a two-step reaction: proline is first activated by ATP to form Pro-AMP and then transferred to the acceptor end of tRNA(Pro). As ProRS can inadvertently accommodate and process non-cognate amino acids such as alanine and cysteine, to avoid such errors it has two additional distinct editing activities against alanine. One activity is designated as 'pretransfer' editing and involves the tRNA(Pro)-independent hydrolysis of activated Ala-AMP. The other activity is designated 'posttransfer' editing and involves deacylation of mischarged Ala-tRNA(Pro). The misacylated Cys-tRNA(Pro) is not edited by ProRS. The sequence is that of Proline--tRNA ligase from Chlamydia muridarum (strain MoPn / Nigg).